The sequence spans 510 residues: Light-independent protochlorophyllide reductase subunit B (510 aa).

D36 lines the [4Fe-4S] cluster pocket. D296 functions as the Proton donor in the catalytic mechanism. 431–432 contributes to the substrate binding site; the sequence is GM.

Belongs to the ChlB/BchB/BchZ family. As to quaternary structure, protochlorophyllide reductase is composed of three subunits; ChlL, ChlN and ChlB. Forms a heterotetramer of two ChlB and two ChlN subunits. It depends on [4Fe-4S] cluster as a cofactor.

It carries out the reaction chlorophyllide a + oxidized 2[4Fe-4S]-[ferredoxin] + 2 ADP + 2 phosphate = protochlorophyllide a + reduced 2[4Fe-4S]-[ferredoxin] + 2 ATP + 2 H2O. It participates in porphyrin-containing compound metabolism; chlorophyll biosynthesis (light-independent). Component of the dark-operative protochlorophyllide reductase (DPOR) that uses Mg-ATP and reduced ferredoxin to reduce ring D of protochlorophyllide (Pchlide) to form chlorophyllide a (Chlide). This reaction is light-independent. The NB-protein (ChlN-ChlB) is the catalytic component of the complex. The sequence is that of Light-independent protochlorophyllide reductase subunit B from Synechococcus sp. (strain JA-2-3B'a(2-13)) (Cyanobacteria bacterium Yellowstone B-Prime).